Consider the following 330-residue polypeptide: Replication factor C small subunit (330 aa).

48–55 (GPPGTGKT) is an ATP binding site.

Belongs to the activator 1 small subunits family. RfcS subfamily. As to quaternary structure, heteropentamer composed of four small subunits (RfcS) and one large subunit (RfcL). A homotetramer of this subunit interacts with PCNA heterodimer PCNA1-PCNA2.

Part of the RFC clamp loader complex which loads the PCNA sliding clamp onto DNA. The complex possesses DNA-dependent ATPase activity. This is Replication factor C small subunit (rfcS) from Saccharolobus solfataricus (strain ATCC 35092 / DSM 1617 / JCM 11322 / P2) (Sulfolobus solfataricus).